A 368-amino-acid chain; its full sequence is Epoxyqueuosine reductase QueH (368 aa).

The [4Fe-4S] cluster site is built by Cys6, Cys7, Cys87, and Cys90. A disulfide bond links Cys174 and Cys176.

The protein belongs to the QueH family.

The catalysed reaction is epoxyqueuosine(34) in tRNA + AH2 = queuosine(34) in tRNA + A + H2O. Its pathway is tRNA modification; tRNA-queuosine biosynthesis. Its function is as follows. Catalyzes the conversion of epoxyqueuosine (oQ) to queuosine (Q), which is a hypermodified base found in the wobble positions of tRNA(Asp), tRNA(Asn), tRNA(His) and tRNA(Tyr). The chain is Epoxyqueuosine reductase QueH from Helicobacter pylori (strain ATCC 700392 / 26695) (Campylobacter pylori).